Reading from the N-terminus, the 75-residue chain is MYKLTLCILTLSFLLLSGLSNTVLARVQYESPSQRNKIGKEVWDQTLLRDLKIGASGSNSGRAPSCNNSCKPNRP.

A signal peptide spans 1 to 25; that stretch reads MYKLTLCILTLSFLLLSGLSNTVLA. Residues 52 to 66 carry the SCOOP motif motif; it reads KIGASGSNSGRAPSC. The disordered stretch occupies residues 54–75; that stretch reads GASGSNSGRAPSCNNSCKPNRP. The SxS motif essential for MIK2 binding motif lies at 56–58; the sequence is SGS. Residues 56-75 are compositionally biased toward polar residues; sequence SGSNSGRAPSCNNSCKPNRP.

This sequence belongs to the serine rich endogenous peptide (SCOOP) phytocytokine family. As to quaternary structure, interacts with MIK2 (via extracellular leucine-rich repeat domain); this interaction triggers the formation of complex between MIK2 and the BAK1/SERK3 and SERK4 coreceptors, and subsequent BAK1 activation by phosphorylation. As to expression, mostly expressed in roots.

It is found in the cell membrane. The protein localises to the secreted. The protein resides in the extracellular space. It localises to the apoplast. Brassicaceae-specific phytocytokine (plant endogenous peptide released into the apoplast) perceived by MIK2 in a BAK1/SERK3 and SERK4 coreceptors-dependent manner, that modulates various physiological and antimicrobial processes including growth prevention and reactive oxygen species (ROS) response regulation. Inhibits root growth. The chain is Serine rich endogenous peptide 20 from Arabidopsis thaliana (Mouse-ear cress).